The following is a 58-amino-acid chain: Large ribosomal subunit protein uL30 (58 aa).

It belongs to the universal ribosomal protein uL30 family. Part of the 50S ribosomal subunit.

The protein is Large ribosomal subunit protein uL30 of Acinetobacter baylyi (strain ATCC 33305 / BD413 / ADP1).